The primary structure comprises 418 residues: Secreted beta-glucosidase SUN41 (418 aa).

The N-terminal stretch at 1 to 23 (MRFSQATVLAFAALSLAAPAFEA) is a signal peptide. Residues 81 to 97 (SEETSSTSTSISSTTTI) are compositionally biased toward low complexity. Positions 81 to 150 (SEETSSTSTS…SGSTNGIEGD (70 aa)) are disordered. Residue N100 is glycosylated (N-linked (GlcNAc...) asparagine). Polar residues predominate over residues 112–126 (SLPSGTIKPSSFATE). Over residues 127-136 (SQSQSQSSST) the composition is skewed to low complexity.

Belongs to the SUN family. In terms of processing, predicted to be a substrate for cleavage by KEX2.

It is found in the secreted. It localises to the cell wall. Cell surface beta-glucosidase involved in cytokinesis, cell wall biogenesis, adhesion to host tissue, and biofilm formation; thus playing an important role in the host-pathogen interaction. Has hydrolytic activity on linear (1-&gt;3)-beta-D-glucans such as laminaribiose and other laminarioligosaccharides. The protein is Secreted beta-glucosidase SUN41 of Candida albicans (strain SC5314 / ATCC MYA-2876) (Yeast).